The following is a 252-amino-acid chain: Serine/threonine phosphatase stp (252 aa).

The segment covering 1–18 (MHAEFRTDRGRIRHHNED) has biased composition (basic and acidic residues). The segment at 1 to 23 (MHAEFRTDRGRIRHHNEDNGGVF) is disordered. Residues 2 to 242 (HAEFRTDRGR…DNITVLLVER (241 aa)) form the PPM-type phosphatase domain. The Mn(2+) site is built by aspartate 36, glycine 37, aspartate 194, and aspartate 233.

Belongs to the PP2C family. Mn(2+) serves as cofactor.

The protein resides in the cytoplasm. The protein localises to the membrane. It catalyses the reaction O-phospho-L-seryl-[protein] + H2O = L-seryl-[protein] + phosphate. The enzyme catalyses O-phospho-L-threonyl-[protein] + H2O = L-threonyl-[protein] + phosphate. Protein phosphatase that dephosphorylates EF-Tu. The polypeptide is Serine/threonine phosphatase stp (stp) (Listeria welshimeri serovar 6b (strain ATCC 35897 / DSM 20650 / CCUG 15529 / CIP 8149 / NCTC 11857 / SLCC 5334 / V8)).